Consider the following 908-residue polypeptide: Protein translocase subunit SecA (908 aa).

Residues Q87, 105 to 109 (GEGKT), and D512 each bind ATP. The segment at 866 to 908 (GSDEDDAIAAHTPMIRDGDKVGRNDPCPCGSGRKYKQCHGKLS) is disordered. The span at 879-888 (MIRDGDKVGR) shows a compositional bias: basic and acidic residues. Zn(2+) is bound by residues C892, C894, C903, and H904. Residues 898–908 (RKYKQCHGKLS) show a composition bias toward basic residues.

The protein belongs to the SecA family. As to quaternary structure, monomer and homodimer. Part of the essential Sec protein translocation apparatus which comprises SecA, SecYEG and auxiliary proteins SecDF-YajC and YidC. It depends on Zn(2+) as a cofactor.

It localises to the cell inner membrane. The protein resides in the cytoplasm. It catalyses the reaction ATP + H2O + cellular proteinSide 1 = ADP + phosphate + cellular proteinSide 2.. Part of the Sec protein translocase complex. Interacts with the SecYEG preprotein conducting channel. Has a central role in coupling the hydrolysis of ATP to the transfer of proteins into and across the cell membrane, serving both as a receptor for the preprotein-SecB complex and as an ATP-driven molecular motor driving the stepwise translocation of polypeptide chains across the membrane. This Shewanella oneidensis (strain ATCC 700550 / JCM 31522 / CIP 106686 / LMG 19005 / NCIMB 14063 / MR-1) protein is Protein translocase subunit SecA.